Consider the following 359-residue polypeptide: Probable dual-specificity RNA methyltransferase RlmN (359 aa).

Glu-93 acts as the Proton acceptor in catalysis. Residues 107–337 (KSERVTLCVS…VTMRYEKGHD (231 aa)) enclose the Radical SAM core domain. A disulfide bridge connects residues Cys-114 and Cys-342. The [4Fe-4S] cluster site is built by Cys-121, Cys-125, and Cys-128. Residues 168–169 (GE), Ser-200, 223–225 (SLH), and Asn-299 contribute to the S-adenosyl-L-methionine site. Residue Cys-342 is the S-methylcysteine intermediate of the active site.

Belongs to the radical SAM superfamily. RlmN family. The cofactor is [4Fe-4S] cluster.

It localises to the cytoplasm. The enzyme catalyses adenosine(2503) in 23S rRNA + 2 reduced [2Fe-2S]-[ferredoxin] + 2 S-adenosyl-L-methionine = 2-methyladenosine(2503) in 23S rRNA + 5'-deoxyadenosine + L-methionine + 2 oxidized [2Fe-2S]-[ferredoxin] + S-adenosyl-L-homocysteine. It carries out the reaction adenosine(37) in tRNA + 2 reduced [2Fe-2S]-[ferredoxin] + 2 S-adenosyl-L-methionine = 2-methyladenosine(37) in tRNA + 5'-deoxyadenosine + L-methionine + 2 oxidized [2Fe-2S]-[ferredoxin] + S-adenosyl-L-homocysteine. Its function is as follows. Specifically methylates position 2 of adenine 2503 in 23S rRNA and position 2 of adenine 37 in tRNAs. The chain is Probable dual-specificity RNA methyltransferase RlmN from Akkermansia muciniphila (strain ATCC BAA-835 / DSM 22959 / JCM 33894 / BCRC 81048 / CCUG 64013 / CIP 107961 / Muc).